The sequence spans 281 residues: Merozoite surface protein 1 (281 aa).

A signal peptide spans 1 to 19 (MKIIFFLCSFLFFIINTQC). The segment covering 63 to 100 (ASAQSGASAQSGASAQSGASAQSGTSGPSGPSGTSPSS) has biased composition (low complexity). The tract at residues 63 to 126 (ASAQSGASAQ…PADASDSDAK (64 aa)) is disordered. Residues 101-110 (RSNTLPRSNT) are compositionally biased toward polar residues. A glycan (N-linked (GlcNAc...) asparagine) is linked at Asn109. Positions 111–120 (SSGASPPADA) are enriched in low complexity. An N-linked (GlcNAc...) asparagine glycan is attached at Asn248.

Forms a complex composed of subunits p83, p30, p38, and p42 which remain non-covalently associated; the complex is formed at the merozoite surface prior to egress from host erythrocytes. Forms a complex composed of processed MSP1 subunits, MSP6 subunit p36 and MSP7; the complex is formed at the merozoite surface prior to egress from host erythrocytes. Within the complex, interacts (via subunit p38) with MSP6 subunit p36 and (via subunits p83, p30 and p38) with MSP7 (via subunit p22). Forms a complex composed of MSP1, MSP6, DBLMSP1 and DBLMSP2. Within the complex, interacts (via subunit p38) with DBLMSP1 and DBLMSP2. Forms a complex composed of MSP1, and rhoptry proteins RhopH3, RAP1 and CLAG9/RhopH3. Within the complex, interacts (via subunits p42 and p19) with RhopH3 (via C-terminus). Forms a complex composed of MSP1, MSP6, MSP7, MSP9 and MSP3; within the complex, MSP6 and MSP9 mediate the binding to the host erythrocyte. Interacts (via subunits p19 and p42) with MSP9; the interaction is direct; MSP1 subunits p19 or p42, and MSP9 form a co-ligand complex that interacts with host SLC4A1/Band 3 protein. May interact with PFD6. Interacts with host spectrin. Post-translationally, the p190 precursor is cleaved by SUB1 prior to merozoite egress into 4 subunits p83, p30, p38, and p42 which remain non-covalently associated. SUB1-mediated proteolytic cleavage occurs in an orderly manner; the first cleavage occurs at the p30/p38 site, followed by cleavage at the p83/p30 site, the last cleavage occurs at the p38/p42 site. The order of cleavage is essential for parasite viability. SUB1-mediated processing is essential for merozoite egress. In a second processing step during erythrocyte invasion, p42 is cleaved by SUB2 into p33 and p19; the latter remains attached to the merozoite surface via its GPI-anchor and is endocytosed during the subsequent ring stage.

Its subcellular location is the cell membrane. It is found in the secreted. In terms of biological role, during the asexual blood stage, involved in merozoite egress from host erythrocytes possibly via its interaction with the host cytoskeleton protein spectrin resulting in the destabilization of the host cytoskeleton and thus leading to erythrocyte cell membrane rupture. Involved in the binding to host erythrocytes and is required for host erythrocyte invasion. The protein is Merozoite surface protein 1 of Plasmodium falciparum (isolate NF7 / Ghana).